A 330-amino-acid chain; its full sequence is MAVVYYDQDADLNVLKGKKIAVMGYGSQGHSQAQNLKDSGLDVVVGLRPESKSRAAAQAAGLEVKTVAEAAAEADIIQILLPDETQARVYREEIAPYLTGGKVLMFSHGFNIHFNQIVPPADVDVIMVAPKGPGHLVRRTYVEGQGVPALIAIYQDASGKAKEIGLAYAKGIGATRAGVIETTFKEETETDLFGEQAVLCGGTTALVKAGFETLVEAGYQPEIAYFECLHELKLIVDLMYEGGIKYMRYSISDTAEYGDVTRGPRLIDDHVKSTMKSILKEIQDGVFAREWILENQAGRPSFNAFRKKEREHLIEQVGDQLREMMSWLKK.

The region spanning 1–182 (MAVVYYDQDA…GATRAGVIET (182 aa)) is the KARI N-terminal Rossmann domain. Residues 25-28 (YGSQ), R48, S51, S53, and 83-86 (DETQ) each bind NADP(+). The active site involves H108. G134 provides a ligand contact to NADP(+). The KARI C-terminal knotted domain maps to 183–328 (TFKEETETDL…DQLREMMSWL (146 aa)). Mg(2+)-binding residues include D191, E195, E227, and E231. S252 is a binding site for substrate.

This sequence belongs to the ketol-acid reductoisomerase family. Mg(2+) serves as cofactor.

The catalysed reaction is (2R)-2,3-dihydroxy-3-methylbutanoate + NADP(+) = (2S)-2-acetolactate + NADPH + H(+). The enzyme catalyses (2R,3R)-2,3-dihydroxy-3-methylpentanoate + NADP(+) = (S)-2-ethyl-2-hydroxy-3-oxobutanoate + NADPH + H(+). Its pathway is amino-acid biosynthesis; L-isoleucine biosynthesis; L-isoleucine from 2-oxobutanoate: step 2/4. It functions in the pathway amino-acid biosynthesis; L-valine biosynthesis; L-valine from pyruvate: step 2/4. Involved in the biosynthesis of branched-chain amino acids (BCAA). Catalyzes an alkyl-migration followed by a ketol-acid reduction of (S)-2-acetolactate (S2AL) to yield (R)-2,3-dihydroxy-isovalerate. In the isomerase reaction, S2AL is rearranged via a Mg-dependent methyl migration to produce 3-hydroxy-3-methyl-2-ketobutyrate (HMKB). In the reductase reaction, this 2-ketoacid undergoes a metal-dependent reduction by NADPH to yield (R)-2,3-dihydroxy-isovalerate. The chain is Ketol-acid reductoisomerase (NADP(+)) from Moorella thermoacetica (strain ATCC 39073 / JCM 9320).